The chain runs to 571 residues: Transcription factor ABORTED MICROSPORES (571 aa).

Residues 275-284 are compositionally biased toward basic and acidic residues; that stretch reads NDKDMNENGR. Disordered regions lie at residues 275–321, 365–390, and 536–571; these read NDKD…AERR, ELQD…MSLN, and DDHQ…YHNQ. A bHLH domain is found at 310 to 359; sequence GSQAKNLMAERRRRKKLNDRLYALRSLVPRITKLDRASILGDAINYVKEL. Over residues 368-378 the composition is skewed to acidic residues; sequence DELEENSETED. Residues 381-390 are compositionally biased toward polar residues; sequence NRPQGGMSLN. Over residues 556-571 the composition is skewed to basic residues; that stretch reads AHHHHHHQHINHYHNQ.

In terms of assembly, homodimer. Interacts with ASHR3. In terms of tissue distribution, mostly expressed in closed, post-meiotic buds, and, to a lower extent, in pre-meiotic buds. Detected in leaves, stems, and flowers.

The protein localises to the nucleus. Transcription factor. Plays a crucial role in tapetum development. Required for male fertility and pollen differentiation, especially during the post-meiotic transcriptional regulation of microspore development within the developing anther. Binds E-box regions in the AHL16/TEK promoter. This is Transcription factor ABORTED MICROSPORES (AMS) from Arabidopsis thaliana (Mouse-ear cress).